The sequence spans 118 residues: Holo-[acyl-carrier-protein] synthase (118 aa).

2 residues coordinate Mg(2+): Asp-8 and Glu-50.

It belongs to the P-Pant transferase superfamily. AcpS family. The cofactor is Mg(2+).

The protein localises to the cytoplasm. It catalyses the reaction apo-[ACP] + CoA = holo-[ACP] + adenosine 3',5'-bisphosphate + H(+). Its function is as follows. Transfers the 4'-phosphopantetheine moiety from coenzyme A to a Ser of acyl-carrier-protein. This Leifsonia xyli subsp. xyli (strain CTCB07) protein is Holo-[acyl-carrier-protein] synthase.